Reading from the N-terminus, the 96-residue chain is Large ribosomal subunit protein uL23 (96 aa).

The protein belongs to the universal ribosomal protein uL23 family. In terms of assembly, part of the 50S ribosomal subunit. Contacts protein L29, and trigger factor when it is bound to the ribosome.

One of the early assembly proteins it binds 23S rRNA. One of the proteins that surrounds the polypeptide exit tunnel on the outside of the ribosome. Forms the main docking site for trigger factor binding to the ribosome. The chain is Large ribosomal subunit protein uL23 from Alkaliphilus oremlandii (strain OhILAs) (Clostridium oremlandii (strain OhILAs)).